The sequence spans 492 residues: MLRFQRGTVKESSSAKLASTSRNGPESSILDPHHSVMELLQRQMEGSEVPSESGVLGESWQQIRESDVGDGGDSNFDQQSNTSAILSSSSEASEDEDLDIQQQLLGGQQEYKNFHMTAEEQLQEQAQGQGFGRPSLLKGTQSRLSEQDSNRSGSVRTIVDKGSCSSSLDEHELNSIFTSDSMSLTKSTGSSSTSFVMPKLSLTYKPSQAKKLLVVGRLSKRFHQDIPREYRQYFHISQSSDPSEFQNYIGIVIVFQELKEFVAMLNRIVQYTDKKPIIPICQPGQRIRVKNILKSFLKNDAITLWYPPVTIANEKSMEKLFKHTVKLVNKLENEEDVLSLSTSDKSLSDETSGYRKNNRRKKHGGKPSTNYSKWITWGISLTIGVSIGYYATYMITTTLLYGKAESHHANEAKGFSITNGNSGSSSISHSTEYYESTISQKGLLRNTIVFIKRTIHNLNGKVGTFFASITQVIKQTPVREDNQFYTLGYMLS.

Disordered stretches follow at residues 1 to 97, 122 to 157, and 342 to 368; these read MLRF…EDED, LQEQ…SVRT, and TSDK…GKPS. A compositionally biased stretch (polar residues) spans 10–26; the sequence is KESSSAKLASTSRNGPE. The segment covering 342–351 has biased composition (low complexity); it reads TSDKSLSDET. Basic residues predominate over residues 356 to 365; it reads KNNRRKKHGG. The chain crosses the membrane as a helical span at residues 374–390; it reads WITWGISLTIGVSIGYY.

This sequence belongs to the ATG32 family.

Its subcellular location is the mitochondrion outer membrane. It is found in the vacuole membrane. It localises to the preautophagosomal structure membrane. Functionally, mitophagy-specific receptor that recruits the autophagic machinery to mitochondria and regulates selective degradation of mitochondria. Mitophagy contributes to regulate mitochondrial quantity and quality by eliminating the mitochondria to a basal level to fulfill cellular energy requirements and preventing excess ROS production. Recruits ATG11 to the surface of mitochondria. Also promotes autophagy-dependent peroxisome degradation. The polypeptide is Autophagy-related protein 32 (ATG32) (Candida glabrata (strain ATCC 2001 / BCRC 20586 / JCM 3761 / NBRC 0622 / NRRL Y-65 / CBS 138) (Yeast)).